A 148-amino-acid chain; its full sequence is Cytochrome c-type biogenesis protein CcmE (148 aa).

The Cytoplasmic portion of the chain corresponds to 1–7 (MKPRHKK). Residues 8-28 (LAIIASSVTALGVASVLVLNA) form a helical; Signal-anchor for type II membrane protein membrane-spanning segment. At 29–148 (FQSNLVFFFS…ADKARKTVMQ (120 aa)) the chain is on the periplasmic side. 2 residues coordinate heme: histidine 123 and tyrosine 127.

This sequence belongs to the CcmE/CycJ family.

It localises to the cell inner membrane. Its function is as follows. Heme chaperone required for the biogenesis of c-type cytochromes. Transiently binds heme delivered by CcmC and transfers the heme to apo-cytochromes in a process facilitated by CcmF and CcmH. This Nitrosospira multiformis (strain ATCC 25196 / NCIMB 11849 / C 71) protein is Cytochrome c-type biogenesis protein CcmE.